The sequence spans 209 residues: MPIGVPKVPFRLPGDEDAVWIDVYNRLFRERLLFLGQQVDDELANQLICIMIYPNGEDDSRDMYLYVNSPGGAVFAGISIYDAMQFVVPDVQTICIGLAASMGSFVLAGGEITKRIALPHARVMIHQPASSYYEGQVGECIMEAEEVLKIRDCITKVYAQRTGKPLWVVSEDTERDVFTSAEEAKVYGVIDPVAVETSSNSPISKLTKS.

Ser101 acts as the Nucleophile in catalysis. His126 is a catalytic residue.

Belongs to the peptidase S14 family. As to quaternary structure, component of the chloroplastic Clp protease core complex.

It localises to the plastid. Its subcellular location is the chloroplast stroma. It catalyses the reaction Hydrolysis of proteins to small peptides in the presence of ATP and magnesium. alpha-casein is the usual test substrate. In the absence of ATP, only oligopeptides shorter than five residues are hydrolyzed (such as succinyl-Leu-Tyr-|-NHMec, and Leu-Tyr-Leu-|-Tyr-Trp, in which cleavage of the -Tyr-|-Leu- and -Tyr-|-Trp bonds also occurs).. Functionally, cleaves peptides in various proteins in a process that requires ATP hydrolysis. Has a chymotrypsin-like activity. Plays a major role in the degradation of misfolded proteins. The sequence is that of ATP-dependent Clp protease proteolytic subunit from Huperzia lucidula (Shining clubmoss).